The sequence spans 268 residues: Ribosomal RNA small subunit methyltransferase A (268 aa).

6 residues coordinate S-adenosyl-L-methionine: Asn18, Leu20, Gly45, Glu66, Asp91, and Asn112.

Belongs to the class I-like SAM-binding methyltransferase superfamily. rRNA adenine N(6)-methyltransferase family. RsmA subfamily.

The protein resides in the cytoplasm. The catalysed reaction is adenosine(1518)/adenosine(1519) in 16S rRNA + 4 S-adenosyl-L-methionine = N(6)-dimethyladenosine(1518)/N(6)-dimethyladenosine(1519) in 16S rRNA + 4 S-adenosyl-L-homocysteine + 4 H(+). Specifically dimethylates two adjacent adenosines (A1518 and A1519) in the loop of a conserved hairpin near the 3'-end of 16S rRNA in the 30S particle. May play a critical role in biogenesis of 30S subunits. The protein is Ribosomal RNA small subunit methyltransferase A of Shewanella frigidimarina (strain NCIMB 400).